The following is a 167-amino-acid chain: Ureidoglycolate lyase (167 aa).

Belongs to the ureidoglycolate lyase family. In terms of assembly, homodimer. The cofactor is Ni(2+).

The enzyme catalyses (S)-ureidoglycolate = urea + glyoxylate. Its pathway is nitrogen metabolism; (S)-allantoin degradation. Catalyzes the catabolism of the allantoin degradation intermediate (S)-ureidoglycolate, generating urea and glyoxylate. Involved in the utilization of allantoin as nitrogen source. The chain is Ureidoglycolate lyase from Pseudomonas fluorescens (strain Pf0-1).